A 749-amino-acid chain; its full sequence is MSTTIIGFPRLGEFRELKFTTEKYFRKEISEEELLAAAKDLRAKHWNIVKEKGITEIPSNDFSHYDNFLDAAFLFNVVPASVQNLDLSDLERYFALGRGYQGEKGDVRALPMKKWFNTNYHYIVPKFEKDTQVKLAGHKIFDEFQEAKELGLNTRPVLVGPFTFLQLSDFEEGVKADDFVDSLVAAYQEVFAKLAELGATRIQLDEAALVKDLTAEEKALFLNLYNKLLADKKGLEVLLQTYFGDVRDVYADLVNLPVDAIGLDFVEGKKTLELVKGGFPADKTLYVGIVNGKNIWRNNYEKSLAVLEQIPAENIVLTSSCSLLHVPFTTANEEFEPALLNHFAFAVEKLDEIRDLDAIRNGQGSEALAANKELFATERVGENAELRARIAGLTDADYTRLPAFAEREAIQEEAFKLPALPTTTIGSFPQTKEVRAKRLAYRKGELSQKEYDAFLAETIDEWIKWQEDIDFDVLVHGEFERNDMVEYFGQNLSGYLFSKNGWVQSYGMRGVKPPIIWGDVTRLNPITVKWSSYAQSRTNKPVKGMLTGPVTILNWSFPREDISIKDSTLQIALAIKDEVLDLEAAGVKIIQIDEAALREKLPLRRSDWYEDYLDWAIPAFRLVHSTVAPDTQIHTHMCYSEFTDIIPAIDNMDADVISFEANRSNLEILDELKAKNFQTEVGPGVYDIHSPRVPNEGEIDNTIEAILAKVPSKKVWINPDCGLKTRGIPETKESLIRLVEAAKAAREKL.

Residues 15-18 (RELK) and lysine 114 each bind 5-methyltetrahydropteroyltri-L-glutamate. L-homocysteine contacts are provided by residues 425–427 (IGS) and glutamate 478. L-methionine contacts are provided by residues 425-427 (IGS) and glutamate 478. Tryptophan 555 contributes to the 5-methyltetrahydropteroyltri-L-glutamate binding site. L-homocysteine is bound at residue aspartate 593. Aspartate 593 contacts L-methionine. Position 599 (glutamate 599) interacts with 5-methyltetrahydropteroyltri-L-glutamate. Positions 636, 638, and 660 each coordinate Zn(2+). Residue histidine 689 is the Proton donor of the active site. Residue cysteine 721 coordinates Zn(2+).

Belongs to the vitamin-B12 independent methionine synthase family. Zn(2+) is required as a cofactor.

It catalyses the reaction 5-methyltetrahydropteroyltri-L-glutamate + L-homocysteine = tetrahydropteroyltri-L-glutamate + L-methionine. Its pathway is amino-acid biosynthesis; L-methionine biosynthesis via de novo pathway; L-methionine from L-homocysteine (MetE route): step 1/1. In terms of biological role, catalyzes the transfer of a methyl group from 5-methyltetrahydrofolate to homocysteine resulting in methionine formation. This Streptococcus pneumoniae serotype 4 (strain ATCC BAA-334 / TIGR4) protein is 5-methyltetrahydropteroyltriglutamate--homocysteine methyltransferase.